Here is a 392-residue protein sequence, read N- to C-terminus: GDSL esterase/lipase ESM1 (392 aa).

The N-terminal stretch at 1 to 28 is a signal peptide; sequence MADNLNLVSVLGVLLVLTIFHNPIIVYA. The active-site Nucleophile is Ser43. Asn146, Asn166, and Asn290 each carry an N-linked (GlcNAc...) asparagine glycan. Catalysis depends on residues Asp324 and His327.

Belongs to the 'GDSL' lipolytic enzyme family.

The protein localises to the secreted. Functionally, represses or inhibits nitriles production from methionine-derived and from indol-3-ylmethyl glucosinolates. Favors isothiocyanate production. The polypeptide is GDSL esterase/lipase ESM1 (ESM1) (Arabidopsis thaliana (Mouse-ear cress)).